The sequence spans 110 residues: MSHKVTKAHNGATLTVAVGELVEIQLPSNPTTGFAWYFEGGTKESPNESMFTVENKYFPPDSKLLGAGGTEHFHVTVKAAGTHAVNLTYMRPWTGPSHDSERFTVYLKAN.

Residues 29–34 (NPTTGF) carry the BC loop motif. Positions 59–68 (PPDSKLLGAG) match the DE loop motif. Residues 91-100 (RPWTGPSHDS) carry the FG loop motif.

Belongs to the protease inhibitor I42 family. In terms of assembly, interacts with cruzipain.

The protein resides in the flagellar pocket. The protein localises to the cytoplasmic vesicle. Its subcellular location is the cell surface. Cysteine protease inhibitor. Inhibits cysteine protease cruzipain. The polypeptide is Chagasin (cha) (Trypanosoma cruzi).